Consider the following 117-residue polypeptide: Large ribosomal subunit protein bL20 (117 aa).

Belongs to the bacterial ribosomal protein bL20 family.

In terms of biological role, binds directly to 23S ribosomal RNA and is necessary for the in vitro assembly process of the 50S ribosomal subunit. It is not involved in the protein synthesizing functions of that subunit. This is Large ribosomal subunit protein bL20 from Campylobacter hominis (strain ATCC BAA-381 / DSM 21671 / CCUG 45161 / LMG 19568 / NCTC 13146 / CH001A).